A 506-amino-acid chain; its full sequence is SPbeta prophage-derived uncharacterized protein YonE (506 aa).

The disordered stretch occupies residues 473-506 (YTFTGNEVGRPNEGNKNNDNTVKSATSNGNDNPI). The span at 486–506 (GNKNNDNTVKSATSNGNDNPI) shows a compositional bias: polar residues.

This chain is SPbeta prophage-derived uncharacterized protein YonE (yonE), found in Bacillus subtilis (strain 168).